A 314-amino-acid polypeptide reads, in one-letter code: Probable cell division protein WhiA (314 aa).

The segment at residues 274–308 (SLKELGEMVSTGTISKSGVNHRLRKLNELADKIRS) is a DNA-binding region (H-T-H motif).

It belongs to the WhiA family.

Its function is as follows. Involved in cell division and chromosome segregation. This Staphylococcus carnosus (strain TM300) protein is Probable cell division protein WhiA.